Here is a 265-residue protein sequence, read N- to C-terminus: Hydroxyacylglutathione hydrolase (265 aa).

Residues H53, H55, D57, H58, H109, D126, and H164 each contribute to the Zn(2+) site.

The protein belongs to the metallo-beta-lactamase superfamily. Glyoxalase II family. In terms of assembly, monomer. Zn(2+) serves as cofactor.

It catalyses the reaction an S-(2-hydroxyacyl)glutathione + H2O = a 2-hydroxy carboxylate + glutathione + H(+). It participates in secondary metabolite metabolism; methylglyoxal degradation; (R)-lactate from methylglyoxal: step 2/2. In terms of biological role, thiolesterase that catalyzes the hydrolysis of S-D-lactoyl-glutathione to form glutathione and D-lactic acid. In Dechloromonas aromatica (strain RCB), this protein is Hydroxyacylglutathione hydrolase.